The following is a 961-amino-acid chain: Glycine dehydrogenase (decarboxylating) (961 aa).

Lysine 709 is modified (N6-(pyridoxal phosphate)lysine).

The protein belongs to the GcvP family. As to quaternary structure, the glycine cleavage system is composed of four proteins: P, T, L and H. Requires pyridoxal 5'-phosphate as cofactor.

It catalyses the reaction N(6)-[(R)-lipoyl]-L-lysyl-[glycine-cleavage complex H protein] + glycine + H(+) = N(6)-[(R)-S(8)-aminomethyldihydrolipoyl]-L-lysyl-[glycine-cleavage complex H protein] + CO2. The glycine cleavage system catalyzes the degradation of glycine. The P protein binds the alpha-amino group of glycine through its pyridoxal phosphate cofactor; CO(2) is released and the remaining methylamine moiety is then transferred to the lipoamide cofactor of the H protein. The polypeptide is Glycine dehydrogenase (decarboxylating) (Streptomyces griseus subsp. griseus (strain JCM 4626 / CBS 651.72 / NBRC 13350 / KCC S-0626 / ISP 5235)).